Reading from the N-terminus, the 195-residue chain is Dephospho-CoA kinase (195 aa).

In terms of domain architecture, DPCK spans 3–195 (IIGLTGSIAM…LFVIKSLLKN (193 aa)). 11 to 16 (AMGKST) contributes to the ATP binding site.

It belongs to the CoaE family.

It localises to the cytoplasm. It catalyses the reaction 3'-dephospho-CoA + ATP = ADP + CoA + H(+). It participates in cofactor biosynthesis; coenzyme A biosynthesis; CoA from (R)-pantothenate: step 5/5. Catalyzes the phosphorylation of the 3'-hydroxyl group of dephosphocoenzyme A to form coenzyme A. The protein is Dephospho-CoA kinase of Bartonella henselae (strain ATCC 49882 / DSM 28221 / CCUG 30454 / Houston 1) (Rochalimaea henselae).